Reading from the N-terminus, the 141-residue chain is Nucleoside diphosphate kinase (141 aa).

The ATP site is built by Lys11, Phe59, Arg87, Thr93, Arg104, and Asn114. The active-site Pros-phosphohistidine intermediate is His117.

It belongs to the NDK family. As to quaternary structure, homotetramer. Mg(2+) serves as cofactor.

Its subcellular location is the cytoplasm. The enzyme catalyses a 2'-deoxyribonucleoside 5'-diphosphate + ATP = a 2'-deoxyribonucleoside 5'-triphosphate + ADP. The catalysed reaction is a ribonucleoside 5'-diphosphate + ATP = a ribonucleoside 5'-triphosphate + ADP. Major role in the synthesis of nucleoside triphosphates other than ATP. The ATP gamma phosphate is transferred to the NDP beta phosphate via a ping-pong mechanism, using a phosphorylated active-site intermediate. This Halorhodospira halophila (strain DSM 244 / SL1) (Ectothiorhodospira halophila (strain DSM 244 / SL1)) protein is Nucleoside diphosphate kinase.